We begin with the raw amino-acid sequence, 302 residues long: MKSGASAASPTAKSFNFGSSRLLALAQQLRVYKPPLSSSFDEREELLAYKESTRKSITHVGFQESMAPVRFRPKKAAVLICLFEGDDGDLRVILTKRSSTLSTHSGEVSLPGGKAEEHDKDDGITATREAEEEIGLDPSLVDVVAFLEPFLSQHLLRVIPVVGILWDRKAFNPTPNPAEVEAVLDAPFEMFLKDENRRSEEFDWMGEKHLVHFFDYKTGDSDYVIWGLTARILIRAATVVYQRPPAFIEQKPNLKYSKMNQATRLYGWLKPLANLHESCENGRLLGHVPAYCLRYLVGISSR.

Residues 1–25 constitute a chloroplast transit peptide; that stretch reads MKSGASAASPTAKSFNFGSSRLLAL. Residues 73–229 form the Nudix hydrolase domain; that stretch reads PKKAAVLICL…DSDYVIWGLT (157 aa). Residues 114-135 carry the Nudix box motif; it reads KAEEHDKDDGITATREAEEEIG. Mg(2+)-binding residues include glutamate 129 and glutamate 133.

This sequence belongs to the Nudix hydrolase family. Mg(2+) is required as a cofactor. Requires Mn(2+) as cofactor. In terms of tissue distribution, expressed in roots, leaves, stems and inflorescences.

Its subcellular location is the plastid. The protein resides in the chloroplast. Functionally, probably mediates the hydrolysis of some nucleoside diphosphate derivatives. The polypeptide is Nudix hydrolase 22, chloroplastic (NUDT22) (Arabidopsis thaliana (Mouse-ear cress)).